The sequence spans 280 residues: Nucleotide-binding protein Swoo_4243 (280 aa).

8-15 (GRSGSGKS) lines the ATP pocket. 56 to 59 (DVRN) provides a ligand contact to GTP.

It belongs to the RapZ-like family.

Functionally, displays ATPase and GTPase activities. The protein is Nucleotide-binding protein Swoo_4243 of Shewanella woodyi (strain ATCC 51908 / MS32).